The chain runs to 442 residues: Transforming growth factor beta-2 proprotein (442 aa).

Positions 1-20 (MHYCVLRTFLLLHLVPVALS) are cleaved as a signal peptide. Residues Asn72, Asn168, and Asn269 are each glycosylated (N-linked (GlcNAc...) asparagine). 4 cysteine pairs are disulfide-bonded: Cys337–Cys346, Cys345–Cys408, Cys374–Cys439, and Cys378–Cys441.

This sequence belongs to the TGF-beta family. In terms of assembly, interacts with the serine proteases, HTRA1 and HTRA3. Interacts with ASPN. Interacts with MFAP5. Interacts with Transforming growth factor beta-2 (TGF-beta-2) chain; interaction is non-covalent and maintains (TGF-beta-2) in a latent state. Interacts with LRRC32/GARP; leading to regulate activation of TGF-beta-2. Interacts with NREP; the interaction results in a decrease in TGFB2 autoinduction. As to quaternary structure, transforming growth factor beta-2: Homodimer; disulfide-linked. Transforming growth factor beta-2: Interacts with TGF-beta receptors (TGFBR1 and TGFBR2), leading to signal transduction. Post-translationally, the precursor proprotein is cleaved in the Golgi apparatus to form Transforming growth factor beta-2 (TGF-beta-2) and Latency-associated peptide (LAP) chains, which remain non-covalently linked, rendering TGF-beta-2 inactive. In terms of tissue distribution, expressed in cardiomyocytes. As to expression, expressed in the aorta, primary bronchus, uterus, heart, skeletal muscle, sciatic nerve and spinal cord but not in the intestine.

The protein localises to the secreted. Its subcellular location is the extracellular space. It localises to the extracellular matrix. Its function is as follows. Precursor of the Latency-associated peptide (LAP) and Transforming growth factor beta-2 (TGF-beta-2) chains, which constitute the regulatory and active subunit of TGF-beta-2, respectively. In terms of biological role, required to maintain the Transforming growth factor beta-2 (TGF-beta-2) chain in a latent state during storage in extracellular matrix. Associates non-covalently with TGF-beta-2 and regulates its activation via interaction with 'milieu molecules', such as LTBP1 and LRRC32/GARP, that control activation of TGF-beta-2. Functionally, multifunctional protein that regulates various processes such as angiogenesis and heart development. Activation into mature form follows different steps: following cleavage of the proprotein in the Golgi apparatus, Latency-associated peptide (LAP) and Transforming growth factor beta-2 (TGF-beta-2) chains remain non-covalently linked rendering TGF-beta-2 inactive during storage in extracellular matrix. At the same time, LAP chain interacts with 'milieu molecules', such as LTBP1 and LRRC32/GARP, that control activation of TGF-beta-2 and maintain it in a latent state during storage in extracellular milieus. Once activated following release of LAP, TGF-beta-2 acts by binding to TGF-beta receptors (TGFBR1 and TGFBR2), which transduce signal. This chain is Transforming growth factor beta-2 proprotein (Tgfb2), found in Rattus norvegicus (Rat).